We begin with the raw amino-acid sequence, 88 residues long: Arminin 7965 (88 aa).

The first 18 residues, 1–18 (MKTVFAILFLTFIAFTYA), serve as a signal peptide directing secretion. The propeptide occupies 19-57 (KSYEDVKEEIKNEVEREIFEDLEEESDVLDSNVRELNDA). At Ala85 the chain carries Alanine amide.

It belongs to the arminin family. In terms of tissue distribution, expressed in entodermal epithelium along the body column.

It localises to the secreted. The protein resides in the target cell membrane. In terms of biological role, antimicrobial peptide with a broad-spectrum antimicrobial activity. Keeps its antibacterial activity under a wide range of salt concentrations that mimic physiological conditions of human blood, which is surprising, since Hydra is an obligate freshwater animal with nearly no salt tolerance. Does not affect red blood cells. The chain is Arminin 7965 from Hydra vulgaris (Hydra).